Consider the following 200-residue polypeptide: MQLNVNGAQAIEVSERTFGGEFNETLVHQAVVAYLAGGRQGSKQQKNRSDVSGGGKRPWRQKGTGRARAGTSRGPLWRGGGVTFAARPQNHDQKLNKKMYRAALRSILSELVRQERLVVVEDFAVDAPKTKSLVSKLGGLGLSDVLIVSDAVDQNLYLAARNLPHVDVRDVLGSDPVSLIAYDKVLITVPAVKKFEELLG.

Positions 38 to 75 are disordered; that stretch reads GRQGSKQQKNRSDVSGGGKRPWRQKGTGRARAGTSRGP.

This sequence belongs to the universal ribosomal protein uL4 family. As to quaternary structure, part of the 50S ribosomal subunit.

Its function is as follows. One of the primary rRNA binding proteins, this protein initially binds near the 5'-end of the 23S rRNA. It is important during the early stages of 50S assembly. It makes multiple contacts with different domains of the 23S rRNA in the assembled 50S subunit and ribosome. In terms of biological role, forms part of the polypeptide exit tunnel. In Azotobacter vinelandii (strain DJ / ATCC BAA-1303), this protein is Large ribosomal subunit protein uL4.